The chain runs to 334 residues: tRNA-dihydrouridine(20/20a) synthase (334 aa).

FMN contacts are provided by residues Pro18 to Met20 and Gln71. Cys101 acts as the Proton donor in catalysis. FMN-binding positions include Lys140, His172, Asn212–Gly214, and Gly234–Arg235.

Belongs to the Dus family. DusA subfamily. Requires FMN as cofactor.

It catalyses the reaction 5,6-dihydrouridine(20) in tRNA + NADP(+) = uridine(20) in tRNA + NADPH + H(+). The catalysed reaction is 5,6-dihydrouridine(20) in tRNA + NAD(+) = uridine(20) in tRNA + NADH + H(+). It carries out the reaction 5,6-dihydrouridine(20a) in tRNA + NADP(+) = uridine(20a) in tRNA + NADPH + H(+). The enzyme catalyses 5,6-dihydrouridine(20a) in tRNA + NAD(+) = uridine(20a) in tRNA + NADH + H(+). In terms of biological role, catalyzes the synthesis of 5,6-dihydrouridine (D), a modified base found in the D-loop of most tRNAs, via the reduction of the C5-C6 double bond in target uridines. Specifically modifies U20 and U20a in tRNAs. The chain is tRNA-dihydrouridine(20/20a) synthase from Xanthomonas axonopodis pv. citri (strain 306).